A 263-amino-acid chain; its full sequence is Reductase pytE (263 aa).

Belongs to the avfA family.

It participates in secondary metabolite biosynthesis. Reductase; part of the gene cluster that mediates the biosynthesis of pyranterreones, a family of antioxidative compounds. The first step of pyranonigrins biosynthesis is performed by the hybrid PKS-NRPS synthetase pytA that condenses 4 malonyl-CoA units ato the acetyl starter unit by the modular PKS of pytA. The acyl chain is then connected to an L-serine through the amide bond by the modular NRPS of pytA. A tetramic acid is formed and released from the PKS-NRPS pytA to give pyranterreone 5 with the help of the thioesterase pytI. Pyranterreone 5 could be methylated by pytC to afford pyranterreone 6. Both pyranterreones 5 and 6 are subsequently oxidized by the FAD-linked oxidoreductase pytB and the cytochrome P450 monooxygenase pytD to form the fused gamma-pyrone core, resulting in pyranterreones 7 and 11, respectively. The hydroxy group at C-8 of pyranterreones 7 and 11 are dehydrated by the aspartyl protease pytH to form a delta-7 double bond to give pyranterreones 3 and 1, 2 accordingly. The exo-methylene of pyranterreone 3 could be reduced into a pendant methyl by reductase pytE to provide pyranterreone 4, also known as cordylactam. Pyranterreone 4 can be reconverted to pyranterreone 3 through pytB-catalyzed dehydrogenation or further oxidized to pyranterreones 9 and 10. This Aspergillus terreus protein is Reductase pytE.